We begin with the raw amino-acid sequence, 313 residues long: Malate dehydrogenase (313 aa).

NAD(+) is bound by residues 11 to 16 and aspartate 35; that span reads GAGSIG. 2 residues coordinate substrate: arginine 84 and arginine 90. NAD(+) contacts are provided by residues asparagine 97 and 120–122; that span reads VTN. Substrate-binding residues include asparagine 122 and arginine 153. Histidine 177 functions as the Proton acceptor in the catalytic mechanism.

It belongs to the LDH/MDH superfamily. MDH type 3 family.

It carries out the reaction (S)-malate + NAD(+) = oxaloacetate + NADH + H(+). Catalyzes the reversible oxidation of malate to oxaloacetate. The polypeptide is Malate dehydrogenase (Ehrlichia chaffeensis (strain ATCC CRL-10679 / Arkansas)).